We begin with the raw amino-acid sequence, 237 residues long: Peptidase E (237 aa).

Active-site charge relay system residues include Ser122, Asp137, and His159.

It belongs to the peptidase S51 family.

The protein localises to the cytoplasm. It catalyses the reaction Dipeptidase E catalyzes the hydrolysis of dipeptides Asp-|-Xaa. It does not act on peptides with N-terminal Glu, Asn or Gln, nor does it cleave isoaspartyl peptides.. In terms of biological role, hydrolyzes dipeptides containing N-terminal aspartate residues. May play a role in allowing the cell to use peptide aspartate to spare carbon otherwise required for the synthesis of the aspartate family of amino acids. The protein is Peptidase E of Shewanella baltica (strain OS185).